The sequence spans 496 residues: tRNA-2-methylthio-N(6)-dimethylallyladenosine synthase (496 aa).

Residues 10–126 (RTYEVRTYGC…LPALLERARV (117 aa)) form the MTTase N-terminal domain. 6 residues coordinate [4Fe-4S] cluster: cysteine 19, cysteine 55, cysteine 89, cysteine 163, cysteine 167, and cysteine 170. Residues 149–380 (RESAYAAWVS…ALVNEIAWEE (232 aa)) form the Radical SAM core domain. The region spanning 382-451 (KRLVGRRVEL…PHHLVADGPV (70 aa)) is the TRAM domain. A disordered region spans residues 465–496 (ARNAAPAPSSGVTLGMPTVGAPAPLPDAPACR). The span at 487 to 496 (APLPDAPACR) shows a compositional bias: pro residues.

The protein belongs to the methylthiotransferase family. MiaB subfamily. As to quaternary structure, monomer. [4Fe-4S] cluster serves as cofactor.

It localises to the cytoplasm. The catalysed reaction is N(6)-dimethylallyladenosine(37) in tRNA + (sulfur carrier)-SH + AH2 + 2 S-adenosyl-L-methionine = 2-methylsulfanyl-N(6)-dimethylallyladenosine(37) in tRNA + (sulfur carrier)-H + 5'-deoxyadenosine + L-methionine + A + S-adenosyl-L-homocysteine + 2 H(+). Functionally, catalyzes the methylthiolation of N6-(dimethylallyl)adenosine (i(6)A), leading to the formation of 2-methylthio-N6-(dimethylallyl)adenosine (ms(2)i(6)A) at position 37 in tRNAs that read codons beginning with uridine. The chain is tRNA-2-methylthio-N(6)-dimethylallyladenosine synthase from Nocardioides sp. (strain ATCC BAA-499 / JS614).